The sequence spans 247 residues: uncharacterized protein (247 aa).

This is an uncharacterized protein from Cryphonectria parasitica (Chestnut blight fungus).